We begin with the raw amino-acid sequence, 711 residues long: Glycine--tRNA ligase beta subunit (711 aa).

The protein belongs to the class-II aminoacyl-tRNA synthetase family. In terms of assembly, tetramer of two alpha and two beta subunits.

It is found in the cytoplasm. It catalyses the reaction tRNA(Gly) + glycine + ATP = glycyl-tRNA(Gly) + AMP + diphosphate. This chain is Glycine--tRNA ligase beta subunit, found in Polaromonas naphthalenivorans (strain CJ2).